The sequence spans 83 residues: Small ribosomal subunit protein uS17 (83 aa).

This sequence belongs to the universal ribosomal protein uS17 family. Part of the 30S ribosomal subunit.

Its function is as follows. One of the primary rRNA binding proteins, it binds specifically to the 5'-end of 16S ribosomal RNA. In Ehrlichia canis (strain Jake), this protein is Small ribosomal subunit protein uS17.